Reading from the N-terminus, the 583-residue chain is Threonine--tRNA ligase (583 aa).

A catalytic region spans residues 185–478; it reads DHRKLGRELD…LVEHYGGAFP (294 aa). 3 residues coordinate Zn(2+): Cys278, His329, and His455.

It belongs to the class-II aminoacyl-tRNA synthetase family. Homodimer. Zn(2+) is required as a cofactor.

It is found in the cytoplasm. The catalysed reaction is tRNA(Thr) + L-threonine + ATP = L-threonyl-tRNA(Thr) + AMP + diphosphate + H(+). Functionally, catalyzes the attachment of threonine to tRNA(Thr) in a two-step reaction: L-threonine is first activated by ATP to form Thr-AMP and then transferred to the acceptor end of tRNA(Thr). Also edits incorrectly charged L-seryl-tRNA(Thr). This Borrelia hermsii (strain HS1 / DAH) protein is Threonine--tRNA ligase.